A 353-amino-acid polypeptide reads, in one-letter code: ATP-dependent kinase YFH7 (353 aa).

31-39 (GSPGSGKST) contributes to the ATP binding site.

This sequence belongs to the YFH7 family.

ATP-dependent kinase that could be involved in endoplasmic reticulum membrane assembly. This Saccharomyces cerevisiae (strain JAY291) (Baker's yeast) protein is ATP-dependent kinase YFH7 (YFH7).